The following is a 527-amino-acid chain: ARS-binding protein 2 (527 aa).

3 disordered regions span residues 160–184 (PDVN…HSAS), 219–265 (SHHM…NSHN), and 282–344 (IDPD…IKRL). Positions 164–177 (SSSISTMRTSTSPS) are enriched in low complexity. The segment covering 225 to 239 (RGSQQAHQTTPQNHS) has biased composition (polar residues). Residues 284-303 (PDWHQWPDDLRDVSSPKESD) show a composition bias toward basic and acidic residues. Residues Ser297, Ser298, and Ser302 each carry the phosphoserine modification. Residues 328–343 (PRKRGRPPGARNKIKR) are compositionally biased toward basic residues.

The protein resides in the nucleus. Functionally, binds, preferentially, to the Maundrell ARS consensus sequence within ARS3002. The chain is ARS-binding protein 2 (abp2) from Schizosaccharomyces pombe (strain 972 / ATCC 24843) (Fission yeast).